The sequence spans 750 residues: Photosystem I P700 chlorophyll a apoprotein A1 (750 aa).

8 consecutive transmembrane segments (helical) span residues 72 to 95 (VFSA…FHGA), 158 to 181 (LYTT…FHYH), 197 to 221 (MNHH…HVSL), 293 to 311 (TVHH…GHMY), 348 to 371 (WHAQ…HHMY), 387 to 413 (LSLF…IFMV), 435 to 457 (AIIS…LYIH), and 532 to 550 (FLVH…LILL). Positions 574 and 583 each coordinate [4Fe-4S] cluster. A run of 2 helical transmembrane segments spans residues 590–611 (HVFL…HFSW) and 664–686 (LSAY…MFLF). H675 serves as a coordination point for chlorophyll a'. Positions 683 and 691 each coordinate chlorophyll a. W692 provides a ligand contact to phylloquinone. A helical membrane pass occupies residues 724 to 744 (AVGVAHYLLGGIATTWAFFLA).

Belongs to the PsaA/PsaB family. In terms of assembly, the PsaA/B heterodimer binds the P700 chlorophyll special pair and subsequent electron acceptors. PSI consists of a core antenna complex that captures photons, and an electron transfer chain that converts photonic excitation into a charge separation. The eukaryotic PSI reaction center is composed of at least 11 subunits. P700 is a chlorophyll a/chlorophyll a' dimer, A0 is one or more chlorophyll a, A1 is one or both phylloquinones and FX is a shared 4Fe-4S iron-sulfur center. is required as a cofactor.

It localises to the plastid. It is found in the chloroplast thylakoid membrane. It catalyses the reaction reduced [plastocyanin] + hnu + oxidized [2Fe-2S]-[ferredoxin] = oxidized [plastocyanin] + reduced [2Fe-2S]-[ferredoxin]. Its function is as follows. PsaA and PsaB bind P700, the primary electron donor of photosystem I (PSI), as well as the electron acceptors A0, A1 and FX. PSI is a plastocyanin-ferredoxin oxidoreductase, converting photonic excitation into a charge separation, which transfers an electron from the donor P700 chlorophyll pair to the spectroscopically characterized acceptors A0, A1, FX, FA and FB in turn. Oxidized P700 is reduced on the lumenal side of the thylakoid membrane by plastocyanin. The polypeptide is Photosystem I P700 chlorophyll a apoprotein A1 (Mesostigma viride (Green alga)).